The following is a 258-amino-acid chain: Thiazole synthase 1 (258 aa).

Lys-97 (schiff-base intermediate with DXP) is an active-site residue. 1-deoxy-D-xylulose 5-phosphate is bound by residues Gly-158, 184 to 185, and 206 to 207; these read AG and NT.

This sequence belongs to the ThiG family. Homotetramer. Forms heterodimers with either ThiH or ThiS.

The protein resides in the cytoplasm. The enzyme catalyses [ThiS sulfur-carrier protein]-C-terminal-Gly-aminoethanethioate + 2-iminoacetate + 1-deoxy-D-xylulose 5-phosphate = [ThiS sulfur-carrier protein]-C-terminal Gly-Gly + 2-[(2R,5Z)-2-carboxy-4-methylthiazol-5(2H)-ylidene]ethyl phosphate + 2 H2O + H(+). The protein operates within cofactor biosynthesis; thiamine diphosphate biosynthesis. Its function is as follows. Catalyzes the rearrangement of 1-deoxy-D-xylulose 5-phosphate (DXP) to produce the thiazole phosphate moiety of thiamine. Sulfur is provided by the thiocarboxylate moiety of the carrier protein ThiS. In vitro, sulfur can be provided by H(2)S. This Syntrophotalea carbinolica (strain DSM 2380 / NBRC 103641 / GraBd1) (Pelobacter carbinolicus) protein is Thiazole synthase 1.